We begin with the raw amino-acid sequence, 564 residues long: Ell-associated factor Eaf (564 aa).

Disordered regions lie at residues 179 to 255 (SGPG…MITD) and 270 to 564 (QANI…DDDD). A compositionally biased stretch (polar residues) spans 186–205 (ENSTMRVSSKTKVSTGSRRN). Serine 215 carries the post-translational modification Phosphoserine. The span at 274–283 (SGSSTGSSSG) shows a compositional bias: low complexity. Residues 297-309 (GKQRQAHGKRQQI) are compositionally biased toward basic residues. Composition is skewed to low complexity over residues 315 to 329 (PPVQ…QQQP), 343 to 387 (QQQQ…QQRP), and 409 to 420 (ASQSVAQAAAVL). The segment covering 438–453 (DSSDSDSGSDSDDSTE) has biased composition (acidic residues). Low complexity-rich tracts occupy residues 463–505 (EQQQ…NQLP), 523–533 (QQPQPQPQQQQ), and 546–564 (NDLL…DDDD).

The protein belongs to the EAF family.

Its subcellular location is the nucleus. Functionally, promotes transcriptional elongation by Su(Tpl)/ELL. Essential for development. The sequence is that of Ell-associated factor Eaf from Drosophila pseudoobscura pseudoobscura (Fruit fly).